Reading from the N-terminus, the 466-residue chain is Putative proline/betaine transporter (466 aa).

A run of 12 helical transmembrane segments spans residues 20 to 42, 63 to 83, 91 to 111, 116 to 136, 164 to 184, 191 to 211, 239 to 259, 285 to 305, 313 to 332, 337 to 354, 377 to 397, and 405 to 425; these read VVAT…YTTA, FAAL…FGII, VVLT…GLLP, IGLW…FSTG, IGTL…TFFL, SFGW…GLYL, IIRF…FFNV, VLIT…GKLA, VFLI…FMLL, FVVI…LSTY, VTFN…ATWL, and LAPA…ITFL.

This sequence belongs to the major facilitator superfamily. Metabolite:H+ Symporter (MHS) family (TC 2.A.1.6) family.

The protein resides in the cell membrane. Its function is as follows. May be a proton symporter involved in the uptake of osmolytes such as proline and glycine betaine. This chain is Putative proline/betaine transporter (proP), found in Staphylococcus aureus (strain MSSA476).